A 399-amino-acid polypeptide reads, in one-letter code: Glutathione-independent formaldehyde dehydrogenase (399 aa).

Cys-47 lines the Zn(2+) pocket. NAD(+) is bound by residues Gly-48, Ser-49, and His-52. Zn(2+)-binding residues include His-68, Cys-98, Cys-101, Cys-104, Cys-112, and Asp-170. Residues Val-198, Asp-218, Arg-223, Val-263, Arg-268, Pro-300, Gln-338, and Thr-339 each contribute to the NAD(+) site.

It belongs to the zinc-containing alcohol dehydrogenase family. Homotetramer. Zn(2+) is required as a cofactor.

The enzyme catalyses formaldehyde + NAD(+) + H2O = formate + NADH + 2 H(+). It carries out the reaction acetaldehyde + NAD(+) + H2O = acetate + NADH + 2 H(+). Functionally, dehydrogenase that catalyzes the NAD(+)-dependent oxidation of formaldehyde and acetaldehyde. Shows no detectable activity against either aldehydes with longer carbon chains or ethanol. The protein is Glutathione-independent formaldehyde dehydrogenase of Pseudomonas aeruginosa (strain LESB58).